The sequence spans 416 residues: Glutamyl-tRNA reductase (416 aa).

Residues 49–52 (TCNR), Ser-105, 110–112 (EPQ), and Gln-116 contribute to the substrate site. The Nucleophile role is filled by Cys-50. 185-190 (GAGETI) contacts NADP(+).

Belongs to the glutamyl-tRNA reductase family. Homodimer.

The catalysed reaction is (S)-4-amino-5-oxopentanoate + tRNA(Glu) + NADP(+) = L-glutamyl-tRNA(Glu) + NADPH + H(+). Its pathway is porphyrin-containing compound metabolism; protoporphyrin-IX biosynthesis; 5-aminolevulinate from L-glutamyl-tRNA(Glu): step 1/2. In terms of biological role, catalyzes the NADPH-dependent reduction of glutamyl-tRNA(Glu) to glutamate 1-semialdehyde (GSA). The protein is Glutamyl-tRNA reductase of Shewanella loihica (strain ATCC BAA-1088 / PV-4).